A 352-amino-acid chain; its full sequence is Rhodopsin (352 aa).

Over M1–K36 the chain is Extracellular. N2 and N15 each carry an N-linked (GlcNAc...) asparagine glycan. A helical transmembrane segment spans residues Y37–V61. The Cytoplasmic segment spans residues T62 to N73. The helical transmembrane segment at Y74–Y96 threads the bilayer. Residues T97–C110 are Extracellular-facing. C110 and C187 are disulfide-bonded. The chain crosses the membrane as a helical span at residues Y111–I133. The short motif at E134–Y136 is the 'Ionic lock' involved in activated form stabilization element. Residues E134 to H152 are Cytoplasmic-facing. A helical membrane pass occupies residues A153 to V173. Over G174–S202 the chain is Extracellular. The helical transmembrane segment at F203 to G224 threads the bilayer. The Cytoplasmic portion of the chain corresponds to R225 to R252. The helical transmembrane segment at M253–Y274 threads the bilayer. The Extracellular portion of the chain corresponds to I275 to V286. Residues F287 to V308 form a helical membrane-spanning segment. The residue at position 296 (K296) is an N6-(retinylidene)lysine. The Cytoplasmic segment spans residues M309–A352. S-palmitoyl cysteine attachment occurs at residues C322 and C323. Residues E332–A352 are disordered. Over residues T335–A352 the composition is skewed to low complexity.

It belongs to the G-protein coupled receptor 1 family. Opsin subfamily. In terms of processing, contains one covalently linked retinal chromophore. Upon light absorption, the covalently bound 11-cis-retinal is converted to all-trans-retinal. After hydrolysis of the Schiff base and release of the covalently bound all-trans-retinal, active rhodopsin is regenerated by binding of a fresh molecule of 11-cis-retinal. In terms of tissue distribution, expressed in rod-shaped photoreceptor cells in the retina that mediate vision in dim ligh (at protein level).

It is found in the membrane. It localises to the cell projection. The protein localises to the cilium. The protein resides in the photoreceptor outer segment. In terms of biological role, photoreceptor required for image-forming vision at low light intensity. Required for photoreceptor cell viability after birth. Light-induced isomerization of 11-cis to all-trans retinal triggers a conformational change that activates signaling via G-proteins. Subsequent receptor phosphorylation mediates displacement of the bound G-protein alpha subunit by arrestin and terminates signaling. In Alligator mississippiensis (American alligator), this protein is Rhodopsin (RHO).